Here is a 116-residue protein sequence, read N- to C-terminus: Ferredoxin (116 aa).

2 consecutive 4Fe-4S ferredoxin-type domains span residues 2 to 31 (TYVVTDECVKCKYTDCVEVCPVDCFYEGER) and 35 to 64 (FMLVINPDECIDCGVCVPDCPIGAIKPESP). C9 and C17 together coordinate [3Fe-4S] cluster. Residues C21, C44, C47, and C50 each contribute to the [4Fe-4S] cluster site. A [3Fe-4S] cluster-binding site is contributed by C54.

Requires [4Fe-4S] cluster as cofactor. [3Fe-4S] cluster serves as cofactor.

Functionally, ferredoxins are iron-sulfur proteins that transfer electrons in a wide variety of metabolic reactions. In Rickettsia conorii (strain ATCC VR-613 / Malish 7), this protein is Ferredoxin (fdxA).